Here is a 355-residue protein sequence, read N- to C-terminus: UDP-N-acetylglucosamine--N-acetylmuramyl-(pentapeptide) pyrophosphoryl-undecaprenol N-acetylglucosamine transferase (355 aa).

UDP-N-acetyl-alpha-D-glucosamine is bound by residues 14–16, Asn126, Arg162, Ser190, Ile243, 262–267, and Gln287; these read TGG and ALTVSE.

It belongs to the glycosyltransferase 28 family. MurG subfamily.

The protein resides in the cell inner membrane. It catalyses the reaction di-trans,octa-cis-undecaprenyl diphospho-N-acetyl-alpha-D-muramoyl-L-alanyl-D-glutamyl-meso-2,6-diaminopimeloyl-D-alanyl-D-alanine + UDP-N-acetyl-alpha-D-glucosamine = di-trans,octa-cis-undecaprenyl diphospho-[N-acetyl-alpha-D-glucosaminyl-(1-&gt;4)]-N-acetyl-alpha-D-muramoyl-L-alanyl-D-glutamyl-meso-2,6-diaminopimeloyl-D-alanyl-D-alanine + UDP + H(+). It participates in cell wall biogenesis; peptidoglycan biosynthesis. Functionally, cell wall formation. Catalyzes the transfer of a GlcNAc subunit on undecaprenyl-pyrophosphoryl-MurNAc-pentapeptide (lipid intermediate I) to form undecaprenyl-pyrophosphoryl-MurNAc-(pentapeptide)GlcNAc (lipid intermediate II). The protein is UDP-N-acetylglucosamine--N-acetylmuramyl-(pentapeptide) pyrophosphoryl-undecaprenol N-acetylglucosamine transferase of Vibrio campbellii (strain ATCC BAA-1116).